Reading from the N-terminus, the 501-residue chain is ATP-dependent rRNA helicase RRP3 (501 aa).

Positions 3–44 form a coiled coil; sequence KIVKRKEKKANDELTSLAEKIRAKALENQKKLIEAEKEGGSE. Residues 36–79 are disordered; sequence EAEKEGGSESDSEEDATAEKKKVLKSKSKSTVSTQNENTNEDES. A phosphoserine mark is found at S43, S45, and S47. Residues 81–109 carry the Q motif motif; that stretch reads ESFSELNLVPELIQACKNLNYSKPTPIQS. The 173-residue stretch at 112–284 folds into the Helicase ATP-binding domain; that stretch reads IPPALEGHDI…RASLTNPVKC (173 aa). 125–132 serves as a coordination point for ATP; it reads AQTGSGKT. Positions 231–234 match the DEAD box motif; sequence DEAD. The Helicase C-terminal domain maps to 307 to 461; the sequence is LKNTYLIYLL…NIILTLRDSV (155 aa). Residues 480 to 501 form a disordered region; it reads IARGKGRRGRMMTRENMDMGER. A compositionally biased stretch (basic and acidic residues) spans 491-501; the sequence is MTRENMDMGER.

The protein belongs to the DEAD box helicase family. DDX47/RRP3 subfamily. As to quaternary structure, interacts with the SSU processome.

It is found in the nucleus. It carries out the reaction ATP + H2O = ADP + phosphate + H(+). ATPase activity is stimulated upon the addition of RNA. Its function is as follows. ATP-dependent rRNA helicase required for pre-ribosomal RNA processing. Involved in the maturation of the 35S-pre-rRNA and to its cleavage to mature 18S rRNA. This Saccharomyces cerevisiae (strain ATCC 204508 / S288c) (Baker's yeast) protein is ATP-dependent rRNA helicase RRP3.